The primary structure comprises 296 residues: 33 kDa chaperonin (296 aa).

2 cysteine pairs are disulfide-bonded: Cys238-Cys240 and Cys271-Cys274.

It belongs to the HSP33 family. Under oxidizing conditions two disulfide bonds are formed involving the reactive cysteines. Under reducing conditions zinc is bound to the reactive cysteines and the protein is inactive.

Its subcellular location is the cytoplasm. Redox regulated molecular chaperone. Protects both thermally unfolding and oxidatively damaged proteins from irreversible aggregation. Plays an important role in the bacterial defense system toward oxidative stress. The sequence is that of 33 kDa chaperonin from Clostridium botulinum (strain Okra / Type B1).